We begin with the raw amino-acid sequence, 902 residues long: MDTSKTSFFLFSVLCSLQLVGAARPGKQQRSCPTPCECEQEGMLVRVDCSDRALTSLPRNLSIFTSYLDLSMNNITNLPSNVMHNLHFLEELRLAGNDLTYIPKGAFAGLGSLKVLMLQNNLLRQVPSEALHNLRSLQSLRLDANHISYVPPSSFNGLFSLRHLWLDDNSLTEIPVRALESLSALQAMTLALNKIHHIPDYAFRNLSSLVVLHLHNNRIYSLGKKCFDGLHSLETLDLNYNNLDEFPAAIKTLKNLKELGFHSNNIKSIPEQAFIGNPSLITIHFYDNPIQHVGRSAFQHLPELRTLILNGASQITEFPDLTGTTSLESLTLTGAQLVYLPSAVCTQLPNLQVLDLSYNHIKDLPSFSGCQRLQKIDLRHNEVYEIRSTTFQQLVGLRSLDLAWNKIAVIHPNSFSSLPSLIKLDLSSNHLTSFPVTGLHGLTHLKLTGNSALQDLIPSEHFPKLRVMEMPYAYQCCAFAVCDNLKHSGQMNKDENSSADDFYRKDIGLLHLQDDRDFEDFLLDFEEDVKVLHSVQCTPSAGPFKPCDHLFGSWLTRTGVWLIVLLSFVCNALVIATVFRPLSYVPSIKLLIGLIAIMNTLMGLSSGVLATVDALTFGNFAQYGAWWESGVGCQITGFLSVFAAETSIFLLTVAALERGFSIKCTTKFETKSSFINVKLSIVFCFLLSIVIAVSPLLSGSTYGTSPLCFPLLFGDPSSMGFMVALVLLNSLCFLVMTIAYTKLYCSLEKGELENIWDCSMVKHIALLLFTNCILYCPVAFLSFSSLLNLTFISPEVNKSILLLIIPLPACLNPLLYILFNPHFKEDIGSLKNGDILWSRSRQTSLASVSSEDAEKQSCDSTQALVTFANSSISYDLPATSSSSSYQMTNNYKLSAVAFVPCH.

The N-terminal stretch at 1–22 (MDTSKTSFFLFSVLCSLQLVGA) is a signal peptide. At 23–558 (ARPGKQQRSC…HLFGSWLTRT (536 aa)) the chain is on the extracellular side. Intrachain disulfides connect Cys-32/Cys-38 and Cys-36/Cys-49. Residues 32-61 (CPTPCECEQEGMLVRVDCSDRALTSLPRNL) enclose the LRRNT domain. LRR repeat units follow at residues 41-61 (EGMLVRVDCSDRALTSLPRNL), 62-85 (SIFTSYLDLSMNNITNLPSNVMHN), 86-109 (LHFLEELRLAGNDLTYIPKGAFAG), 111-133 (GSLKVLMLQNNLLRQVPSEALHN), 134-157 (LRSLQSLRLDANHISYVPPSSFNG), 159-181 (FSLRHLWLDDNSLTEIPVRALES), 182-205 (LSALQAMTLALNKIHHIPDYAFRN), 207-229 (SSLVVLHLHNNRIYSLGKKCFDG), 230-253 (LHSLETLDLNYNNLDEFPAAIKTL), 254-276 (KNLKELGFHSNNIKSIPEQAFIG), 278-300 (PSLITIHFYDNPIQHVGRSAFQH), 302-324 (PELRTLILNGASQITEFPDLTGT), 325-347 (TSLESLTLTGAQLVYLPSAVCTQ), 348-372 (LPNLQVLDLSYNHIKDLPSFSGCQR), 374-393 (QKIDLRHNEVYEIRSTTFQQ), 394-417 (LVGLRSLDLAWNKIAVIHPNSFSS), and 418-441 (LPSLIKLDLSSNHLTSFPVTGLHG). Residues Asn-60 and Asn-74 are each glycosylated (N-linked (GlcNAc...) asparagine). N-linked (GlcNAc...) asparagine glycosylation occurs at Asn-205. The cysteines at positions 345 and 370 are disulfide-linked. Residues Cys-476 and Cys-537 are joined by a disulfide bond. N-linked (GlcNAc...) asparagine glycosylation occurs at Asn-496. A helical membrane pass occupies residues 559-579 (GVWLIVLLSFVCNALVIATVF). Residues 580–589 (RPLSYVPSIK) are Cytoplasmic-facing. Residues 590–610 (LLIGLIAIMNTLMGLSSGVLA) traverse the membrane as a helical segment. The LRR 18 repeat unit spans residues 598–619 (MNTLMGLSSGVLATVDALTFGN). The Extracellular segment spans residues 611-634 (TVDALTFGNFAQYGAWWESGVGCQ). Cys-633 and Cys-708 are disulfide-bonded. A helical membrane pass occupies residues 635–655 (ITGFLSVFAAETSIFLLTVAA). The Cytoplasmic segment spans residues 656–678 (LERGFSIKCTTKFETKSSFINVK). The chain crosses the membrane as a helical span at residues 679 to 699 (LSIVFCFLLSIVIAVSPLLSG). Topologically, residues 700–718 (STYGTSPLCFPLLFGDPSS) are extracellular. Residues 719–739 (MGFMVALVLLNSLCFLVMTIA) form a helical membrane-spanning segment. Topologically, residues 740 to 763 (YTKLYCSLEKGELENIWDCSMVKH) are cytoplasmic. The chain crosses the membrane as a helical span at residues 764 to 784 (IALLLFTNCILYCPVAFLSFS). The Extracellular segment spans residues 785-798 (SLLNLTFISPEVNK). Asn-788 and Asn-797 each carry an N-linked (GlcNAc...) asparagine glycan. A helical transmembrane segment spans residues 799-819 (SILLLIIPLPACLNPLLYILF). The Cytoplasmic segment spans residues 820-902 (NPHFKEDIGS…LSAVAFVPCH (83 aa)).

It belongs to the G-protein coupled receptor 1 family.

It localises to the cell membrane. It is found in the golgi apparatus. Its subcellular location is the trans-Golgi network membrane. Functionally, receptor for R-spondins that potentiates the canonical Wnt signaling pathway and acts as a stem cell marker of the intestinal epithelium and the hair follicle. Upon binding to R-spondins (RSPO1, RSPO2, RSPO3 or RSPO4), associates with phosphorylated LRP6 and frizzled receptors that are activated by extracellular Wnt receptors, triggering the canonical Wnt signaling pathway to increase expression of target genes. In contrast to classical G-protein coupled receptors, does not activate heterotrimeric G-proteins to transduce the signal. Involved in the development and/or maintenance of the adult intestinal stem cells during postembryonic development. The polypeptide is Leucine-rich repeat-containing G-protein coupled receptor 5 (lgr5) (Xenopus tropicalis (Western clawed frog)).